A 371-amino-acid chain; its full sequence is Putative RING finger protein ORF117 (371 aa).

The RING-type zinc-finger motif lies at 72–108 (CCICFRKDVIYKEVPCGHYICVECYKEPIRNVCPECN). Positions 178 to 192 (EEEMNESEAEEEEPV) are enriched in acidic residues. The segment at 178 to 218 (EEEMNESEAEEEEPVPEIAQFEALNTPPPPPTNRRPKIRRP) is disordered.

The polypeptide is Putative RING finger protein ORF117 (Magallana gigas (Pacific oyster)).